Here is a 222-residue protein sequence, read N- to C-terminus: 2-hydroxypent-2,4-dienoate hydratase (222 aa).

It belongs to the hydratase/decarboxylase family.

Its pathway is aromatic compound metabolism; benzoate degradation via hydroxylation. Functionally, conversion of 2-hydroxypent-2,4-dienoate into 4-hydroxy-2-oxopentanoate. This chain is 2-hydroxypent-2,4-dienoate hydratase (xylJ), found in Pseudomonas putida (Arthrobacter siderocapsulatus).